The following is a 124-amino-acid chain: Large ribosomal subunit protein bL21 (124 aa).

The protein belongs to the bacterial ribosomal protein bL21 family. As to quaternary structure, part of the 50S ribosomal subunit. Contacts protein L20.

This protein binds to 23S rRNA in the presence of protein L20. The sequence is that of Large ribosomal subunit protein bL21 from Synechococcus sp. (strain WH7803).